Consider the following 360-residue polypeptide: Photosystem II protein D1 (360 aa).

The next 3 helical transmembrane spans lie at 30 to 47 (YVGW…AATT), 119 to 134 (HFLI…QWEL), and 143 to 157 (WICV…AAFA). Chlorophyll a is bound at residue His-119. Residue Tyr-127 coordinates pheophytin a. [CaMn4O5] cluster contacts are provided by Asp-171 and Glu-190. The chain crosses the membrane as a helical span at residues 198 to 219 (FHMAGVAGMFGGALFSAMHGSL). A chlorophyll a-binding site is contributed by His-199. Residues His-216 and 265 to 266 (SF) each bind a quinone. A Fe cation-binding site is contributed by His-216. His-273 is a binding site for Fe cation. Residues 275–289 (FLASWPVICVWLTSM) traverse the membrane as a helical segment. Positions 333, 334, 343, and 345 each coordinate [CaMn4O5] cluster. Residues 346–360 (AAESTSVALVAPAIG) constitute a propeptide that is removed on maturation.

The protein belongs to the reaction center PufL/M/PsbA/D family. In terms of assembly, PSII is composed of 1 copy each of membrane proteins PsbA, PsbB, PsbC, PsbD, PsbE, PsbF, PsbH, PsbI, PsbJ, PsbK, PsbL, PsbM, PsbT, PsbX, PsbY, Psb30/Ycf12, peripheral proteins PsbO, CyanoQ (PsbQ), PsbU, PsbV and a large number of cofactors. It forms dimeric complexes. The D1/D2 heterodimer binds P680, chlorophylls that are the primary electron donor of PSII, and subsequent electron acceptors. It shares a non-heme iron and each subunit binds pheophytin, quinone, additional chlorophylls, carotenoids and lipids. D1 provides most of the ligands for the Mn4-Ca-O5 cluster of the oxygen-evolving complex (OEC). There is also a Cl(-1) ion associated with D1 and D2, which is required for oxygen evolution. The PSII complex binds additional chlorophylls, carotenoids and specific lipids. serves as cofactor. In terms of processing, tyr-162 forms a radical intermediate that is referred to as redox-active TyrZ, YZ or Y-Z. Post-translationally, C-terminally processed by CtpA; processing is essential to allow assembly of the oxygen-evolving complex and thus photosynthetic growth.

It localises to the cellular thylakoid membrane. It catalyses the reaction 2 a plastoquinone + 4 hnu + 2 H2O = 2 a plastoquinol + O2. Functionally, photosystem II (PSII) is a light-driven water:plastoquinone oxidoreductase that uses light energy to abstract electrons from H(2)O, generating O(2) and a proton gradient subsequently used for ATP formation. It consists of a core antenna complex that captures photons, and an electron transfer chain that converts photonic excitation into a charge separation. The D1/D2 (PsbA/PsbD) reaction center heterodimer binds P680, the primary electron donor of PSII as well as several subsequent electron acceptors. This is Photosystem II protein D1 from Prochlorococcus marinus (strain NATL1A).